We begin with the raw amino-acid sequence, 188 residues long: dCTP deaminase (188 aa).

Residues 111–116, 135–137, Q156, Y170, and Q180 each bind dCTP; these read KSTYAR and TLE. The active-site Proton donor/acceptor is the E137.

The protein belongs to the dCTP deaminase family. In terms of assembly, homotrimer.

The enzyme catalyses dCTP + H2O + H(+) = dUTP + NH4(+). Its pathway is pyrimidine metabolism; dUMP biosynthesis; dUMP from dCTP (dUTP route): step 1/2. Functionally, catalyzes the deamination of dCTP to dUTP. In Acidovorax sp. (strain JS42), this protein is dCTP deaminase.